Consider the following 1199-residue polypeptide: DNA-directed RNA polymerase subunit beta' (1199 aa).

Zn(2+)-binding residues include Cys60, Cys62, Cys75, and Cys78. Asp449, Asp451, and Asp453 together coordinate Mg(2+). Zn(2+)-binding residues include Cys818, Cys892, Cys899, and Cys902.

The protein belongs to the RNA polymerase beta' chain family. The RNAP catalytic core consists of 2 alpha, 1 beta, 1 beta' and 1 omega subunit. When a sigma factor is associated with the core the holoenzyme is formed, which can initiate transcription. Mg(2+) serves as cofactor. The cofactor is Zn(2+).

It carries out the reaction RNA(n) + a ribonucleoside 5'-triphosphate = RNA(n+1) + diphosphate. DNA-dependent RNA polymerase catalyzes the transcription of DNA into RNA using the four ribonucleoside triphosphates as substrates. The protein is DNA-directed RNA polymerase subunit beta' of Bacillus velezensis (strain DSM 23117 / BGSC 10A6 / LMG 26770 / FZB42) (Bacillus amyloliquefaciens subsp. plantarum).